The sequence spans 442 residues: Decapping and exoribonuclease protein 1 (442 aa).

Positions Gln31–Thr40 are enriched in basic and acidic residues. Residues Gln31–Tyr56 are disordered. The span at Ser41 to Arg53 shows a compositional bias: low complexity. A substrate-binding site is contributed by Arg101. Glu255 is a binding site for a divalent metal cation. A substrate-binding site is contributed by Glu293. Positions 295, 306, and 307 each coordinate a divalent metal cation. Substrate is bound by residues Lys308 and Gln330.

Belongs to the DXO/Dom3Z family. A divalent metal cation is required as a cofactor.

It is found in the cytoplasm. The catalysed reaction is a 5'-end NAD(+)-phospho-ribonucleoside in mRNA + H2O = a 5'-end phospho-ribonucleoside in mRNA + NAD(+) + H(+). It carries out the reaction a 5'-end (N(7)-methyl 5'-triphosphoguanosine)-ribonucleoside-ribonucleotide in mRNA + H2O = a (N(7)-methyl 5'-triphosphoguanosine)-nucleoside + a 5'-end phospho-ribonucleoside in mRNA + H(+). In terms of biological role, decapping enzyme for NAD-capped RNAs: specifically hydrolyzes the nicotinamide adenine dinucleotide (NAD) cap from a subset of RNAs by removing the entire NAD moiety from the 5'-end of an NAD-capped RNA. The NAD-cap is present at the 5'-end of some RNAs and snoRNAs. In contrast to the canonical 5'-end N7 methylguanosine (m7G) cap, the NAD cap promotes mRNA decay. Also acts as a non-canonical decapping enzyme that removes the entire cap structure of m7G capped or incompletely capped RNAs. Has decapping activity toward incomplete 5'-end m7G cap mRNAs such as unmethylated 5'-end-capped RNA (cap0), while it has no activity toward 2'-O-ribose methylated m7G cap (cap1). Also has 5'-3' exonuclease activity. This is Decapping and exoribonuclease protein 1 (DXO1) from Saccharomyces cerevisiae (strain ATCC 204508 / S288c) (Baker's yeast).